A 438-amino-acid chain; its full sequence is Enolase (438 aa).

Gln-174 contributes to the (2R)-2-phosphoglycerate binding site. The Proton donor role is filled by Glu-216. The Mg(2+) site is built by Asp-253, Glu-297, and Asp-324. Residues Lys-349, Arg-378, Ser-379, and Lys-400 each contribute to the (2R)-2-phosphoglycerate site. Lys-349 (proton acceptor) is an active-site residue.

It belongs to the enolase family. Component of the RNA degradosome, a multiprotein complex involved in RNA processing and mRNA degradation. The cofactor is Mg(2+).

The protein localises to the cytoplasm. The protein resides in the secreted. Its subcellular location is the cell surface. The enzyme catalyses (2R)-2-phosphoglycerate = phosphoenolpyruvate + H2O. It participates in carbohydrate degradation; glycolysis; pyruvate from D-glyceraldehyde 3-phosphate: step 4/5. In terms of biological role, catalyzes the reversible conversion of 2-phosphoglycerate (2-PG) into phosphoenolpyruvate (PEP). It is essential for the degradation of carbohydrates via glycolysis. This is Enolase from Psychrobacter arcticus (strain DSM 17307 / VKM B-2377 / 273-4).